The primary structure comprises 897 residues: MIHFFHTLQGEKNAGFDVLYHNMKHGQIATKELAEFVRERAAIEETYSKSMSKLAKMASNGSPLGTFAPMWDVFRVSSDKLALCHLELMRKMNDLIRDINKYSDEQVKIHRKTKEEAIGTLESVQSLQVQNGHLQKTREGYHSKCVELERLRKEGVPQKELEKAELKCKKAAESFAGSIEKFNRAGGDFEQKMSESAQKFQDIEEAHLRQMKLLIKGYSHSIEDTHVQVGQVHEEFKQNVENIGIENLIQKFTEQKGTGKERPEGPVGFEEYLSSLASENSKKSRAKAFRIPGLGKRDKEPDSTVHVYFLQNNSPLEVDDEGFVIRADVKQNDIEKEGNFYSSDSDFDDEEPKKFHIQIRPVASSNRSNSAANEQELKATVGALTLPPNRVVSVKKQLSRRSEGEGESVPQRVIAKVEVCACRLSSTASGSDALFGPPLESAFKSHSFSGREQLQNAFAASEFFSKFYSSSLENVEDSGLDSPSHQPLGVSPDPTGWAAWPSSQSQSKDSINAASQSRGGSNRPTPSPNPAPSSQSNTEWMNDIIREGPYSQIMQDSSERLALAPPRSVRSKRSSVAITRKNSDFSRSLCSSPLPDPNASTCVLYSKMLNCAPAGLSRGPSPISLSAQESWPVAAAITEYINAYFRGGEHNRCLVKITGDLTMSFPAGITRIFTANPNAPVLSFRLVNISRVDHFLPNQKLLYSDPSQSDPDTKDFWFNMQALTLHLQREAELNPQASYYNVALLKYQASSQDPSRAPLLLSAECQRSGTVTRVSLDYHCCPATAPATQLTSVQVLLPLDHSATDLQCQPPAAWNAEERRLLWKLDDLSSVSGSGTLCASWQCLEVPRGPAPSLAVQFVGSGASLSGLDVELVGSRYRMSLVKKRFATGKYMAGCSL.

Positions 1-276 (MIHFFHTLQG…VGFEEYLSSL (276 aa)) are mediates membrane-binding. The 247-residue stretch at 2–248 (IHFFHTLQGE…NVENIGIENL (247 aa)) folds into the F-BAR domain. Residues 134–154 (LQKTREGYHSKCVELERLRKE) are a coiled coil. The tract at residues 475–537 (VEDSGLDSPS…PNPAPSSQSN (63 aa)) is disordered. Residues 501 to 520 (PSSQSQSKDSINAASQSRGG) show a composition bias toward polar residues. In terms of domain architecture, MHD spans 630–894 (SWPVAAAITE…RFATGKYMAG (265 aa)).

Belongs to the FCHO family. May oligomerize and form homotetramer. Interacts with acvr1l/alk8; linking this receptor to clathrin-mediated endocytosis.

The protein resides in the membrane. It is found in the clathrin-coated pit. May function in an early step of clathrin-mediated endocytosis. May regulate Bmp signaling by regulating clathrin-mediated endocytosis of Bmp receptors. This is F-BAR domain only protein 1 (fcho1) from Danio rerio (Zebrafish).